We begin with the raw amino-acid sequence, 483 residues long: Glutamyl-tRNA(Gln) amidotransferase subunit A (483 aa).

Catalysis depends on charge relay system residues K76 and S151. The active-site Acyl-ester intermediate is the S175.

Belongs to the amidase family. GatA subfamily. Heterotrimer of A, B and C subunits.

The enzyme catalyses L-glutamyl-tRNA(Gln) + L-glutamine + ATP + H2O = L-glutaminyl-tRNA(Gln) + L-glutamate + ADP + phosphate + H(+). Its function is as follows. Allows the formation of correctly charged Gln-tRNA(Gln) through the transamidation of misacylated Glu-tRNA(Gln) in organisms which lack glutaminyl-tRNA synthetase. The reaction takes place in the presence of glutamine and ATP through an activated gamma-phospho-Glu-tRNA(Gln). The sequence is that of Glutamyl-tRNA(Gln) amidotransferase subunit A from Pseudomonas putida (strain W619).